A 314-amino-acid chain; its full sequence is Quinolinate synthase (314 aa).

Iminosuccinate-binding residues include His-27 and Ser-44. Cys-89 contacts [4Fe-4S] cluster. Residues 115-117 (YIN) and Ser-132 each bind iminosuccinate. Residue Cys-175 participates in [4Fe-4S] cluster binding. Residues 201-203 (HPE) and Thr-218 each bind iminosuccinate. Cys-271 serves as a coordination point for [4Fe-4S] cluster.

It belongs to the quinolinate synthase family. Type 2 subfamily. Requires [4Fe-4S] cluster as cofactor.

The protein resides in the cytoplasm. It catalyses the reaction iminosuccinate + dihydroxyacetone phosphate = quinolinate + phosphate + 2 H2O + H(+). It functions in the pathway cofactor biosynthesis; NAD(+) biosynthesis; quinolinate from iminoaspartate: step 1/1. Its function is as follows. Catalyzes the condensation of iminoaspartate with dihydroxyacetone phosphate to form quinolinate. This Ehrlichia chaffeensis (strain ATCC CRL-10679 / Arkansas) protein is Quinolinate synthase.